The chain runs to 651 residues: Acetyl-coenzyme A synthetase (651 aa).

Residues 189 to 192 (RGGK), T311, and N335 each bind CoA. Residues 387–389 (GEP), 411–416 (DTWWQT), D500, and R515 each bind ATP. S523 is a CoA binding site. Residue R526 participates in ATP binding. V537, H539, and V542 together coordinate Mg(2+). Residue R584 coordinates CoA. The residue at position 609 (K609) is an N6-acetyllysine.

Belongs to the ATP-dependent AMP-binding enzyme family. Requires Mg(2+) as cofactor. In terms of processing, acetylated. Deacetylation by the SIR2-homolog deacetylase activates the enzyme.

The enzyme catalyses acetate + ATP + CoA = acetyl-CoA + AMP + diphosphate. Functionally, catalyzes the conversion of acetate into acetyl-CoA (AcCoA), an essential intermediate at the junction of anabolic and catabolic pathways. AcsA undergoes a two-step reaction. In the first half reaction, AcsA combines acetate with ATP to form acetyl-adenylate (AcAMP) intermediate. In the second half reaction, it can then transfer the acetyl group from AcAMP to the sulfhydryl group of CoA, forming the product AcCoA. The protein is Acetyl-coenzyme A synthetase of Allorhizobium ampelinum (strain ATCC BAA-846 / DSM 112012 / S4) (Agrobacterium vitis (strain S4)).